The sequence spans 1058 residues: MPKRKDIQKIMVIGSGPIIIGQAAEFDYAGTQACLALKEEGYKVILVNSNPATIMTDKEIADKVYIEPLTLEFVNRIIRKERPDAILPTLGGQTGLNMAMALSKAGILDDLEIELLGTKLSAIDQAEDRDLFKQLMQELDQPIPESTIVKTVDEAVTFARDIGYPVIVRPAFTLGGTGGGICSSEEELCEITENGLKLSPVTQCLIERSIAGFKEIEYEVMRDSADNALVVCNMENFDPVGIHTGDSIVFAPTQTLSDIENQMLRDASLKIIRALKIEGGCNVQLALDPYSFKYYVIEVNPRVSRSSALASKATGYPIAKLAAKIAVGLTLDEMINPITGTTYAMFEPALDYVVAKIPRFPFDKFEHGERQLGTQMKATGEVMAIGRNLEESLLKACRSLEIGVCHNEMTSLSNISDEELVTKVIKAQDDRLFYLSEAIRRGYSIEELESLTKIDLFFLDKLLHIVEIEQELQMHVDHLESLKKAKRYGFSDQKIAEIWQKDESDIRAMRHSHSLYPVYKMVDTCAAEFDAKTPYFYSTYELENESVQSNKESILVLGSGPIRIGQGVEFDYATVHSVKAIQKAGYEAIIMNSNPETVSTDFSVSDKLYFEPLTFEDVMNVIDLEQPKGVIVQFGGQTAINLAQALSEAGVTILGTQVEDLDRAEDRDLFEKALKELGIPQPQGQTATNEEEALEAAKKIGFPVLVRPSYVLGGRAMEIVENKEDLIEYIRTAVKASPEHPILVDSYIFGKECEVDAISDGKSVLIPGIMEHIERAGVHSGDSMAVYPPQQLSKQIQETIAEYTKRLAIGLNCIGMMNVQFVIKNEQVYVIEVNPRASRTVPFLSKVTGIPMAQIATKLILGQTLKDLGYEDGLYPQSQLVHIKAPVFSFTKLAQVDSLLGPEMKSTGEVMGSDTSLEKALYKAFEANNSHLSEFGQIVFTIADDSKAEALSLARRFKAIGYQIMATQGTAAYFAEQGLSACLVGKIGDAANDIPTLVRHGHVQAIVNTVGIKRTADKDGQMIRSSAIEQGVPLFTALDTAKAMLTVLESRCFNIEAI.

Positions 1 to 401 (MPKRKDIQKI…SLLKACRSLE (401 aa)) are carboxyphosphate synthetic domain. Positions 129, 169, 175, 176, 208, 210, 215, 241, 242, 243, 284, and 298 each coordinate ATP. One can recognise an ATP-grasp 1 domain in the interval 133-327 (KQLMQELDQP…IAKLAAKIAV (195 aa)). 3 residues coordinate Mg(2+): Gln-284, Glu-298, and Asn-300. Positions 284, 298, and 300 each coordinate Mn(2+). The interval 402–546 (IGVCHNEMTS…YSTYELENES (145 aa)) is oligomerization domain. The carbamoyl phosphate synthetic domain stretch occupies residues 547 to 929 (VQSNKESILV…ALYKAFEANN (383 aa)). The 191-residue stretch at 671 to 861 (EKALKELGIP…MAQIATKLIL (191 aa)) folds into the ATP-grasp 2 domain. Residues Arg-707, Ser-746, Ile-748, Glu-752, Gly-777, Val-778, His-779, Ser-780, Gln-820, and Glu-832 each coordinate ATP. 3 residues coordinate Mg(2+): Gln-820, Glu-832, and Asn-834. The Mn(2+) site is built by Gln-820, Glu-832, and Asn-834. The region spanning 930-1058 (SHLSEFGQIV…ESRCFNIEAI (129 aa)) is the MGS-like domain. The interval 930 to 1058 (SHLSEFGQIV…ESRCFNIEAI (129 aa)) is allosteric domain.

Belongs to the CarB family. Composed of two chains; the small (or glutamine) chain promotes the hydrolysis of glutamine to ammonia, which is used by the large (or ammonia) chain to synthesize carbamoyl phosphate. Tetramer of heterodimers (alpha,beta)4. Mg(2+) serves as cofactor. Mn(2+) is required as a cofactor.

It catalyses the reaction hydrogencarbonate + L-glutamine + 2 ATP + H2O = carbamoyl phosphate + L-glutamate + 2 ADP + phosphate + 2 H(+). It carries out the reaction hydrogencarbonate + NH4(+) + 2 ATP = carbamoyl phosphate + 2 ADP + phosphate + 2 H(+). The protein operates within amino-acid biosynthesis; L-arginine biosynthesis; carbamoyl phosphate from bicarbonate: step 1/1. It functions in the pathway pyrimidine metabolism; UMP biosynthesis via de novo pathway; (S)-dihydroorotate from bicarbonate: step 1/3. In terms of biological role, large subunit of the glutamine-dependent carbamoyl phosphate synthetase (CPSase). CPSase catalyzes the formation of carbamoyl phosphate from the ammonia moiety of glutamine, carbonate, and phosphate donated by ATP, constituting the first step of 2 biosynthetic pathways, one leading to arginine and/or urea and the other to pyrimidine nucleotides. The large subunit (synthetase) binds the substrates ammonia (free or transferred from glutamine from the small subunit), hydrogencarbonate and ATP and carries out an ATP-coupled ligase reaction, activating hydrogencarbonate by forming carboxy phosphate which reacts with ammonia to form carbamoyl phosphate. This Streptococcus pyogenes serotype M3 (strain ATCC BAA-595 / MGAS315) protein is Carbamoyl phosphate synthase large chain.